We begin with the raw amino-acid sequence, 302 residues long: MSKRVTVLMGGFSTERAVSLNSGAAAGEALRQAGYAVTLLDVGRDVAAFIAALTQTRPDVVFNALHGRFGEDGAIQGILDIMALPYTHSGRLASAIAMDKPSAKLVFERFAIPVAPHVVADRASVLAETAMARPYVVKPLDQGSSVGVTIVTSETNDLPFSRDDWPYGRQVMVERFIPGRELTVGVMGDKALGVTEIVTDHRFYDYDAKYAQGGSRHIVPAPVAPEVFAQAQELSVLAHQALGCRGVSRADLRFDGETLYMLEVNTQPGMTDTSLVPEQALHAGISFPDLVTWLVETAQCDA.

Positions K104–E296 constitute an ATP-grasp domain. A130–T183 serves as a coordination point for ATP. D251, E263, and N265 together coordinate Mg(2+).

This sequence belongs to the D-alanine--D-alanine ligase family. It depends on Mg(2+) as a cofactor. Mn(2+) serves as cofactor.

The protein localises to the cytoplasm. The catalysed reaction is 2 D-alanine + ATP = D-alanyl-D-alanine + ADP + phosphate + H(+). The protein operates within cell wall biogenesis; peptidoglycan biosynthesis. Its function is as follows. Cell wall formation. The sequence is that of D-alanine--D-alanine ligase from Rhodospirillum rubrum (strain ATCC 11170 / ATH 1.1.1 / DSM 467 / LMG 4362 / NCIMB 8255 / S1).